Consider the following 55-residue polypeptide: Large ribosomal subunit protein bL33 (55 aa).

This sequence belongs to the bacterial ribosomal protein bL33 family.

The protein is Large ribosomal subunit protein bL33 of Proteus mirabilis (strain HI4320).